A 2148-amino-acid polypeptide reads, in one-letter code: Polyketide synthase 1 (2148 aa).

The tract at residues 19–261 (FIFGDQSSCN…TPLAVHAPYH (243 aa)) is N-terminal acylcarrier protein transacylase domain (SAT). A Ketosynthase family 3 (KS3) domain is found at 394-829 (ESKIAIIGMS…GGNTALLVED (436 aa)). Active-site for beta-ketoacyl synthase activity residues include Cys566, His701, and His745. The segment at 929–1233 (AFVFSGQGSQ…PSLMRNKDGW (305 aa)) is malonyl-CoA:ACP transacylase (MAT) domain. Ser1018 serves as the catalytic For acyl/malonyl transferase activity. The product template (PT) domain stretch occupies residues 1310–1624 (TASVHRIVHE…RKVLNTAMPP (315 aa)). Residues 1314–1447 (HRIVHESVEK…SSLHFEQPKV (134 aa)) form an N-terminal hotdog fold region. In terms of domain architecture, PKS/mFAS DH spans 1314–1619 (HRIVHESVEK…FQGIPRKVLN (306 aa)). The Proton acceptor; for dehydratase activity role is filled by His1346. Residues 1474–1619 (LNSRMSSGVI…FQGIPRKVLN (146 aa)) form a C-terminal hotdog fold region. Asp1533 functions as the Proton donor; for dehydratase activity in the catalytic mechanism. The tract at residues 1619 to 1655 (NTAMPPPKSQNEAPVRSGPAKPAAKPPRSASSEHSGH) is disordered. Over residues 1634 to 1650 (RSGPAKPAAKPPRSASS) the composition is skewed to low complexity. In terms of domain architecture, Carrier 1 spans 1678–1752 (RNPMLPVFKI…DLAAHLGLDT (75 aa)). O-(pantetheine 4'-phosphoryl)serine is present on Ser1712. 2 stretches are compositionally biased toward low complexity: residues 1757–1769 (QSSG…GGLS) and 1779–1796 (TSSV…SVSG). Residues 1757–1796 (QSSGQSSSFGGLSPRSDSIGEITSSVTTPPSLSPRSSVSG) form a disordered region. The 78-residue stretch at 1793-1870 (SVSGSQCKDV…SFKHMFQQGH (78 aa)) folds into the Carrier 2 domain. Residue Ser1830 is modified to O-(pantetheine 4'-phosphoryl)serine. The interval 1882–2146 (LKQYRATSTL…ERVAAFIRST (265 aa)) is thioesterase (TE) domain. Ser1973 functions as the For thioesterase activity in the catalytic mechanism.

In terms of biological role, polyketide synthase; part of the Pks1 gene cluster that mediates the biosynthesis of an anthraquinone derivative pigment that contributes to conidial pigmentation that provides protection from UV radiation, heat and cold stress. The polyketide synthase Pks1 produces 1-acetyl-2,4,6,8-tetrahydroxy-9,10-anthraquinone though condensation of acetyl-CoA with malonyl-CoA. The dehydratase EthD and the laccase Mlac1 further convert the anthraquinone derivative into the final conidial pigment. This Metarhizium anisopliae (strain ARSEF 549) protein is Polyketide synthase 1.